A 266-amino-acid chain; its full sequence is Glutamate racemase (266 aa).

Substrate contacts are provided by residues 9-10 (DS) and 41-42 (YG). C72 functions as the Proton donor/acceptor in the catalytic mechanism. 73–74 (NT) contributes to the substrate binding site. C184 functions as the Proton donor/acceptor in the catalytic mechanism. Substrate is bound at residue 185 to 186 (TH).

The protein belongs to the aspartate/glutamate racemases family.

It catalyses the reaction L-glutamate = D-glutamate. It functions in the pathway cell wall biogenesis; peptidoglycan biosynthesis. Functionally, provides the (R)-glutamate required for cell wall biosynthesis. This is Glutamate racemase from Staphylococcus aureus (strain bovine RF122 / ET3-1).